Consider the following 327-residue polypeptide: tRNA uridine(34) hydroxylase (327 aa).

Positions 123 to 217 (SDPEVLVVDT…YLEEVPQEQS (95 aa)) constitute a Rhodanese domain. Cysteine 177 functions as the Cysteine persulfide intermediate in the catalytic mechanism.

The protein belongs to the TrhO family.

The enzyme catalyses uridine(34) in tRNA + AH2 + O2 = 5-hydroxyuridine(34) in tRNA + A + H2O. Functionally, catalyzes oxygen-dependent 5-hydroxyuridine (ho5U) modification at position 34 in tRNAs. The protein is tRNA uridine(34) hydroxylase of Vibrio cholerae serotype O1 (strain ATCC 39315 / El Tor Inaba N16961).